A 97-amino-acid polypeptide reads, in one-letter code: Large ribosomal subunit protein uL23 (97 aa).

It belongs to the universal ribosomal protein uL23 family. Part of the 50S ribosomal subunit. Contacts protein L29, and trigger factor when it is bound to the ribosome.

In terms of biological role, one of the early assembly proteins it binds 23S rRNA. One of the proteins that surrounds the polypeptide exit tunnel on the outside of the ribosome. Forms the main docking site for trigger factor binding to the ribosome. The sequence is that of Large ribosomal subunit protein uL23 from Sulfurihydrogenibium sp. (strain YO3AOP1).